We begin with the raw amino-acid sequence, 441 residues long: Mannose-6-phosphate isomerase 2 (441 aa).

Positions 131, 133, 158, and 296 each coordinate Zn(2+). R315 is an active-site residue.

It belongs to the mannose-6-phosphate isomerase type 1 family. It depends on Zn(2+) as a cofactor. Not expressed in any organs under light (at protein level).

It catalyses the reaction D-mannose 6-phosphate = D-fructose 6-phosphate. Its pathway is nucleotide-sugar biosynthesis; GDP-alpha-D-mannose biosynthesis; alpha-D-mannose 1-phosphate from D-fructose 6-phosphate: step 1/2. With respect to regulation, inhibited by EDTA, Zn(2+), Cd(2+), DTT, p-chloromercuribenzoate and L-ascorbic acid (AsA). In terms of biological role, involved in the synthesis of the GDP-mannose and dolichol-phosphate-mannose required for a number of critical mannosyl transfer reactions. The chain is Mannose-6-phosphate isomerase 2 (PMI2) from Arabidopsis thaliana (Mouse-ear cress).